The sequence spans 166 residues: Interferon gamma (166 aa).

Residues 1-23 (MNYTSFILAFQLCAILGSSTYYC) form the signal peptide. Q24 carries the pyrrolidone carboxylic acid modification. N-linked (GlcNAc...) asparagine glycans are attached at residues N39 and N106. Residues 147–166 (ANLRKRKRSQNPFRGRRALQ) are disordered. The segment covering 148 to 166 (NLRKRKRSQNPFRGRRALQ) has biased composition (basic residues).

The protein belongs to the type II (or gamma) interferon family. In terms of assembly, homodimer. Interacts with IFNGR1 (via extracellular domain); this interaction promotes IFNGR1 dimerization. Released primarily from activated T lymphocytes.

It localises to the secreted. Type II interferon produced by immune cells such as T-cells and NK cells that plays crucial roles in antimicrobial, antiviral, and antitumor responses by activating effector immune cells and enhancing antigen presentation. Primarily signals through the JAK-STAT pathway after interaction with its receptor IFNGR1 to affect gene regulation. Upon IFNG binding, IFNGR1 intracellular domain opens out to allow association of downstream signaling components JAK2, JAK1 and STAT1, leading to STAT1 activation, nuclear translocation and transcription of IFNG-regulated genes. Many of the induced genes are transcription factors such as IRF1 that are able to further drive regulation of a next wave of transcription. Plays a role in class I antigen presentation pathway by inducing a replacement of catalytic proteasome subunits with immunoproteasome subunits. In turn, increases the quantity, quality, and repertoire of peptides for class I MHC loading. Increases the efficiency of peptide generation also by inducing the expression of activator PA28 that associates with the proteasome and alters its proteolytic cleavage preference. Up-regulates as well MHC II complexes on the cell surface by promoting expression of several key molecules such as cathepsins B/CTSB, H/CTSH, and L/CTSL. Participates in the regulation of hematopoietic stem cells during development and under homeostatic conditions by affecting their development, quiescence, and differentiation. The polypeptide is Interferon gamma (IFNG) (Equus caballus (Horse)).